We begin with the raw amino-acid sequence, 213 residues long: GTP-binding protein YPTC4 (213 aa).

13–21 (GDTGVGKSC) lines the GTP pocket. The Effector region motif lies at 35–43 (HDLTIGVEF). Residues 61–65 (DTAGQ), 119–122 (NKCD), and 149–151 (SAR) each bind GTP. A disordered region spans residues 194–213 (AGPQTVKPGEGGAAKSSSCC). S-geranylgeranyl cysteine attachment occurs at residues C212 and C213.

This sequence belongs to the small GTPase superfamily. Rab family.

It localises to the cell membrane. Functionally, protein transport. Probably involved in vesicular traffic. The chain is GTP-binding protein YPTC4 (YPTC4) from Chlamydomonas reinhardtii (Chlamydomonas smithii).